Reading from the N-terminus, the 26-residue chain is AMP deaminase 1 (26 aa).

The protein belongs to the metallo-dependent hydrolases superfamily. Adenosine and AMP deaminases family. As to quaternary structure, homotetramer.

It catalyses the reaction AMP + H2O + H(+) = IMP + NH4(+). It participates in purine metabolism; IMP biosynthesis via salvage pathway; IMP from AMP: step 1/1. Its function is as follows. AMP deaminase plays a critical role in energy metabolism. This is AMP deaminase 1 (AMPD1) from Gallus gallus (Chicken).